The primary structure comprises 280 residues: Manganese transport system membrane protein MntC (280 aa).

The next 9 helical transmembrane spans lie at 16–36, 41–61, 62–82, 92–112, 137–157, 168–188, 193–213, 221–241, and 244–264; these read ALIT…FIIL, LMGD…YMMG, MNFF…IGFV, TAIG…ISFA, TIII…EFLV, YGLN…LVTV, TVGI…AYLL, IMLA…FSYI, and LASG…AFLF.

The protein belongs to the ABC-3 integral membrane protein family.

The protein localises to the cell membrane. In terms of biological role, this protein is probably a component of a manganese permease, a binding protein-dependent, ATP-driven transport system. This Listeria innocua serovar 6a (strain ATCC BAA-680 / CLIP 11262) protein is Manganese transport system membrane protein MntC (mntC).